Consider the following 661-residue polypeptide: UvrABC system protein B (661 aa).

In terms of domain architecture, Helicase ATP-binding spans aspartate 28 to isoleucine 414. Residue glycine 41–threonine 48 coordinates ATP. The Beta-hairpin motif lies at tyrosine 94 to isoleucine 117. In terms of domain architecture, Helicase C-terminal spans glutamine 432–isoleucine 598. The segment at glutamate 603 to arginine 624 is disordered. Positions glutamine 625–glutamate 660 constitute a UVR domain.

The protein belongs to the UvrB family. Forms a heterotetramer with UvrA during the search for lesions. Interacts with UvrC in an incision complex.

It localises to the cytoplasm. Its function is as follows. The UvrABC repair system catalyzes the recognition and processing of DNA lesions. A damage recognition complex composed of 2 UvrA and 2 UvrB subunits scans DNA for abnormalities. Upon binding of the UvrA(2)B(2) complex to a putative damaged site, the DNA wraps around one UvrB monomer. DNA wrap is dependent on ATP binding by UvrB and probably causes local melting of the DNA helix, facilitating insertion of UvrB beta-hairpin between the DNA strands. Then UvrB probes one DNA strand for the presence of a lesion. If a lesion is found the UvrA subunits dissociate and the UvrB-DNA preincision complex is formed. This complex is subsequently bound by UvrC and the second UvrB is released. If no lesion is found, the DNA wraps around the other UvrB subunit that will check the other stand for damage. This chain is UvrABC system protein B, found in Staphylococcus epidermidis (strain ATCC 35984 / DSM 28319 / BCRC 17069 / CCUG 31568 / BM 3577 / RP62A).